We begin with the raw amino-acid sequence, 212 residues long: Pyridoxine/pyridoxamine 5'-phosphate oxidase (212 aa).

Substrate is bound by residues 8 to 11 (RREY) and Lys-66. Residues 61-66 (RIVLLK), 76-77 (FT), Arg-82, Lys-83, and Gln-105 contribute to the FMN site. Tyr-123, Arg-127, and Ser-131 together coordinate substrate. Residues 140–141 (QS) and Trp-185 contribute to the FMN site. Substrate is bound at residue 191–193 (RLH). Arg-195 is a binding site for FMN.

This sequence belongs to the pyridoxamine 5'-phosphate oxidase family. As to quaternary structure, homodimer. Requires FMN as cofactor.

It catalyses the reaction pyridoxamine 5'-phosphate + O2 + H2O = pyridoxal 5'-phosphate + H2O2 + NH4(+). The catalysed reaction is pyridoxine 5'-phosphate + O2 = pyridoxal 5'-phosphate + H2O2. It participates in cofactor metabolism; pyridoxal 5'-phosphate salvage; pyridoxal 5'-phosphate from pyridoxamine 5'-phosphate: step 1/1. The protein operates within cofactor metabolism; pyridoxal 5'-phosphate salvage; pyridoxal 5'-phosphate from pyridoxine 5'-phosphate: step 1/1. Its function is as follows. Catalyzes the oxidation of either pyridoxine 5'-phosphate (PNP) or pyridoxamine 5'-phosphate (PMP) into pyridoxal 5'-phosphate (PLP). This chain is Pyridoxine/pyridoxamine 5'-phosphate oxidase, found in Shewanella pealeana (strain ATCC 700345 / ANG-SQ1).